The following is a 388-amino-acid chain: Pentatricopeptide repeat-containing protein 2, mitochondrial (388 aa).

The stretch at 166-200 (TSFNILMDMLFIKGKYKSALQVLIEMKNQDVKFTK) is one PPR repeat. Phosphoserine is present on Ser382.

Belongs to the PTCD2 family.

The protein resides in the mitochondrion. Involved in mitochondrial RNA maturation and mitochondrial respiratory chain function. In Homo sapiens (Human), this protein is Pentatricopeptide repeat-containing protein 2, mitochondrial (PTCD2).